The chain runs to 478 residues: Subtilisin-like protease 3 (478 aa).

The N-terminal stretch at 1–17 is a signal peptide; that stretch reads MKFSTILPILWANCCLC. The region spanning 70 to 167 is the Inhibitor I9 domain; that stretch reads RYVIVFNEDI…FVEQETTVKI (98 aa). The Peptidase S8 domain occupies 177 to 478; it reads PWGLHRVSHR…GGGKKLDGFW (302 aa). Catalysis depends on charge relay system residues D213, H245, and S407.

Belongs to the peptidase S8 family.

Functionally, serine protease with unknown substrate. The sequence is that of Subtilisin-like protease 3 (YSP3) from Saccharomyces cerevisiae (strain ATCC 204508 / S288c) (Baker's yeast).